The sequence spans 279 residues: Oxygen-dependent coproporphyrinogen-III oxidase (279 aa).

Residue Ser-102 coordinates substrate. A divalent metal cation is bound by residues His-106 and His-116. His-116 serves as the catalytic Proton donor. Position 118-120 (118-120 (NTR)) interacts with substrate. A divalent metal cation contacts are provided by His-149 and His-179. An important for dimerization region spans residues 244–279 (YVEFNLLYDRGTKFGLMTDGNVEAILMSLPPEVKFN).

This sequence belongs to the aerobic coproporphyrinogen-III oxidase family. As to quaternary structure, homodimer. Requires a divalent metal cation as cofactor.

The protein localises to the cytoplasm. The catalysed reaction is coproporphyrinogen III + O2 + 2 H(+) = protoporphyrinogen IX + 2 CO2 + 2 H2O. It participates in porphyrin-containing compound metabolism; protoporphyrin-IX biosynthesis; protoporphyrinogen-IX from coproporphyrinogen-III (O2 route): step 1/1. In terms of biological role, involved in the heme biosynthesis. Catalyzes the aerobic oxidative decarboxylation of propionate groups of rings A and B of coproporphyrinogen-III to yield the vinyl groups in protoporphyrinogen-IX. The polypeptide is Oxygen-dependent coproporphyrinogen-III oxidase (Rickettsia africae (strain ESF-5)).